A 158-amino-acid chain; its full sequence is NADPH-dependent 7-cyano-7-deazaguanine reductase (158 aa).

Residues 1-37 form a disordered region; it reads MAKRSIKSETSPELQLGRPVTAPDSPETARLDRVPNP. The segment covering 27 to 37 has biased composition (basic and acidic residues); the sequence is ETARLDRVPNP. Residue C56 is the Thioimide intermediate of the active site. The active-site Proton donor is the D63. Residues 78–80 and 97–98 contribute to the substrate site; these read VES and HE.

This sequence belongs to the GTP cyclohydrolase I family. QueF type 1 subfamily.

It is found in the cytoplasm. It carries out the reaction 7-aminomethyl-7-carbaguanine + 2 NADP(+) = 7-cyano-7-deazaguanine + 2 NADPH + 3 H(+). Its pathway is tRNA modification; tRNA-queuosine biosynthesis. Functionally, catalyzes the NADPH-dependent reduction of 7-cyano-7-deazaguanine (preQ0) to 7-aminomethyl-7-deazaguanine (preQ1). The chain is NADPH-dependent 7-cyano-7-deazaguanine reductase from Bradyrhizobium sp. (strain BTAi1 / ATCC BAA-1182).